Reading from the N-terminus, the 218-residue chain is Protein-methionine-sulfoxide reductase heme-binding subunit MsrQ (218 aa).

5 helical membrane-spanning segments follow: residues 14 to 34, 60 to 80, 86 to 106, 121 to 141, and 155 to 175; these read AVHA…WQVW, LLLI…AVLI, LGLY…WLDL, PYIT…ITST, and LHML…WLVK.

Belongs to the MsrQ family. Heterodimer of a catalytic subunit (MsrP) and a heme-binding subunit (MsrQ). Requires FMN as cofactor. Heme b is required as a cofactor.

The protein resides in the cell inner membrane. In terms of biological role, part of the MsrPQ system that repairs oxidized periplasmic proteins containing methionine sulfoxide residues (Met-O), using respiratory chain electrons. Thus protects these proteins from oxidative-stress damage caused by reactive species of oxygen and chlorine generated by the host defense mechanisms. MsrPQ is essential for the maintenance of envelope integrity under bleach stress, rescuing a wide series of structurally unrelated periplasmic proteins from methionine oxidation. MsrQ provides electrons for reduction to the reductase catalytic subunit MsrP, using the quinone pool of the respiratory chain. The chain is Protein-methionine-sulfoxide reductase heme-binding subunit MsrQ from Xanthomonas campestris pv. campestris (strain 8004).